A 417-amino-acid polypeptide reads, in one-letter code: Tryptophan synthase beta chain (417 aa).

Lysine 108 is modified (N6-(pyridoxal phosphate)lysine).

This sequence belongs to the TrpB family. As to quaternary structure, tetramer of two alpha and two beta chains. The cofactor is pyridoxal 5'-phosphate.

It catalyses the reaction (1S,2R)-1-C-(indol-3-yl)glycerol 3-phosphate + L-serine = D-glyceraldehyde 3-phosphate + L-tryptophan + H2O. The protein operates within amino-acid biosynthesis; L-tryptophan biosynthesis; L-tryptophan from chorismate: step 5/5. In terms of biological role, the beta subunit is responsible for the synthesis of L-tryptophan from indole and L-serine. The polypeptide is Tryptophan synthase beta chain (trpB) (Mycobacterium leprae (strain TN)).